The following is a 714-amino-acid chain: Zinc finger matrin-type protein 1 (714 aa).

A Matrin-type 1 zinc finger spans residues 89–119 (NFCKPCGVVLQHESERISHFESEIHAQNVKF). The interval 172 to 214 (HYVGKSHSPTQNQSLEEHDQVSPSTCSPKMDEPNTTPAPPPFL) is disordered. The Matrin-type 2 zinc finger occupies 230–254 (YVCHICSITFTSLHMFRSHMQGTEH). Over residues 417 to 434 (RERVDSEHRQRPCEERFS) the composition is skewed to basic and acidic residues. 2 disordered regions span residues 417–469 (RERV…NDDF) and 571–714 (MPAS…ILGF). Composition is skewed to polar residues over residues 437–446 (APQTYQQEYS) and 575–588 (LSLS…SSYN). Over residues 609-619 (SHRRRRQKRKR) the composition is skewed to basic residues. Composition is skewed to basic and acidic residues over residues 620–632 (HLEE…EKEQ) and 640–662 (SYQD…EDKA). Over residues 669–678 (TKHRRKKRKH) the composition is skewed to basic residues.

Its subcellular location is the nucleus. In Mus musculus (Mouse), this protein is Zinc finger matrin-type protein 1 (Zmat1).